Here is a 249-residue protein sequence, read N- to C-terminus: Metal-staphylopine import system ATP-binding protein CntF (249 aa).

The region spanning 2 to 244 (IKIKDVEKSY…DNAYTRELIE (243 aa)) is the ABC transporter domain. 42 to 49 (GESGSGKS) is an ATP binding site.

It belongs to the ABC transporter superfamily. As to quaternary structure, the complex is composed of two ATP-binding proteins (CntD and CntF), two transmembrane proteins (CntB and CntC) and a solute-binding protein (CntA).

It localises to the cell membrane. Nickel/cobalt import is reduced in the presence of zinc. In terms of biological role, part of the ABC transporter complex CntABCDF (Opp1) involved in the uptake of metal in complex with the metallophore staphylopine (StP). Involved in the import of divalent metals ions such as nickel, cobalt and zinc. Probably responsible for energy coupling to the transport system. Plays a major role in nickel/cobalt import in zinc-depleted conditions. Contributes to virulence. Required for full urease activity in vitro. This is Metal-staphylopine import system ATP-binding protein CntF from Staphylococcus aureus (strain NCTC 8325 / PS 47).